The chain runs to 315 residues: Protein sprouty homolog 2 (315 aa).

A compositionally biased stretch (polar residues) spans 1-15 (MEARAQSGNGSQPLL). The disordered stretch occupies residues 1–140 (MEARAQSGNG…SEQRLLGSSF (140 aa)). Basic and acidic residues predominate over residues 20–32 (DGGRPRGEPDPRD). Residues 108 to 140 (SRSISTVSSGSRSSTRTSTSSSSSEQRLLGSSF) are compositionally biased toward low complexity. Positions 118–315 (SRSSTRTSTS…VPRRNFEKPT (198 aa)) are required for interaction with CAV1. In terms of domain architecture, SPR spans 177 to 291 (RCEDCGKCKC…CYDRVNRPGC (115 aa)). The interval 178–315 (CEDCGKCKCK…VPRRNFEKPT (138 aa)) is required for interaction with TESK1.

The protein belongs to the sprouty family. As to quaternary structure, forms heterodimers with SPRY1. Forms a tripartite complex containing GAB1, METTL13 and SPRY2. Within the complex interacts with METTL13. Interacts with RAF1. Interacts (via C-terminus) with TESK1 (via C-terminus); the interaction disrupts SPRY2 interaction with GRB2, potentially via disruption of SPRY2 serine dephosphorylation. Interacts with PPP2R1A/PP2A-A and PPP2CA/PP2A-C; the interaction with PPP2CA/PP2A-C is inhibited by interaction with TESK1, possibly by vesicular sequestration of SPRY2. Inhibition of the interaction with the serine/threonine-protein phosphatase 2A (PP2A) holoenzyme results in loss of PP2A-mediated dephosphorylation, resulting in the loss of SPRY2 interaction with GRB2. Interacts with GRB2. Interacts with CBL/C-CBL; the interaction inhibits CBL-mediated ubiquitination of EGFR. Interacts (via C-terminus) with CAV1 (via C-terminus). In terms of processing, cleaved at Pro-144 by the prolyl endopeptidase FAP (seprase) activity (in vitro).

The protein localises to the cytoplasm. It is found in the cytoskeleton. The protein resides in the cell projection. It localises to the ruffle membrane. In terms of biological role, antagonist of fibroblast growth factor (FGF) pathways via inhibition of FGF-mediated phosphorylation of ERK1/2. Thereby acts as an antagonist of FGF-induced retinal lens fiber differentiation, may inhibit limb bud outgrowth and may negatively modulate respiratory organogenesis. Inhibits TGFB-induced epithelial-to-mesenchymal transition in retinal lens epithelial cells. Inhibits CBL/C-CBL-mediated EGFR ubiquitination. The protein is Protein sprouty homolog 2 (SPRY2) of Pongo abelii (Sumatran orangutan).